Here is a 548-residue protein sequence, read N- to C-terminus: Viridiflorene synthase (548 aa).

Mg(2+) is bound by residues aspartate 301, aspartate 305, aspartate 444, threonine 448, and glutamate 452. Positions aspartate 301–aspartate 305 match the DDXXD motif motif.

This sequence belongs to the terpene synthase family. Tpsa subfamily. Mg(2+) is required as a cofactor. Expressed in stem and leaf trichomes. Detected in roots, fruits and flowers.

It is found in the cytoplasm. The enzyme catalyses (2E,6E)-farnesyl diphosphate = viridiflorene + diphosphate. It participates in secondary metabolite biosynthesis; terpenoid biosynthesis. Functionally, sesquiterpene synthase involved in the production of viridiflorene from (E,E)-farnesyl diphosphate. Can also use (Z,Z)-FPP to make several unidentified sesquiterpenes. The polypeptide is Viridiflorene synthase (Solanum lycopersicum (Tomato)).